We begin with the raw amino-acid sequence, 276 residues long: Integrin-binding sialoprotein (276 aa).

A signal peptide spans 1-16 (MRSALLLACLLATASA). The segment at 54–251 (HRYKGSDSSE…EEPARGDSYR (198 aa)) is disordered. Acidic residues predominate over residues 61–75 (SSEEEGDGSEEEEEG). A compositionally biased stretch (basic and acidic residues) spans 106–119 (QDCKGGQKGTRGDS). The short motif at 116–118 (RGD) is the Cell attachment site element. Acidic residues predominate over residues 120–144 (GDEDSDEEEEEEEEEEEEEEVEEQD). Over residues 145–165 (VSVNGTSTNTTAETPHGNNTV) the composition is skewed to polar residues. Residues N148, N153, and N162 are each glycosylated (N-linked (GlcNAc...) asparagine). Positions 167 to 188 (AEEEEDDDEEEEEEEEEEEEAE) are enriched in acidic residues. Positions 189–200 (ATTAAATTAQDE) are enriched in low complexity. Positions 228–230 (RGD) match the Cell attachment site motif. The short motif at 246-248 (RGD) is the Integrin-binding motif element. Residues Y272 and Y273 each carry the sulfotyrosine modification.

As to quaternary structure, monomer. Interacts with integrins; the interaction promotes cell adhesion. Phosphorylated on serine and threonine residues.

It is found in the secreted. Binds tightly to hydroxyapatite. Appears to form an integral part of the mineralized matrix. Probably important to cell-matrix interaction. Promotes adhesion and migration of various cells via the alpha-V/beta-3 integrin receptor (ITGAV:ITGB3). The chain is Integrin-binding sialoprotein (IBSP) from Gallus gallus (Chicken).